The following is a 273-amino-acid chain: 5-deoxy-glucuronate isomerase (273 aa).

The protein belongs to the isomerase IolB family.

The catalysed reaction is 5-deoxy-D-glucuronate = 5-dehydro-2-deoxy-D-gluconate. Its pathway is polyol metabolism; myo-inositol degradation into acetyl-CoA; acetyl-CoA from myo-inositol: step 4/7. Functionally, involved in the isomerization of 5-deoxy-glucuronate (5DG) to 5-dehydro-2-deoxy-D-gluconate (DKG or 2-deoxy-5-keto-D-gluconate). The chain is 5-deoxy-glucuronate isomerase from Listeria monocytogenes serotype 4b (strain CLIP80459).